The sequence spans 255 residues: Thiazole synthase (255 aa).

The active-site Schiff-base intermediate with DXP is Lys96. 1-deoxy-D-xylulose 5-phosphate-binding positions include Gly157, 183–184, and 205–206; these read AG and NT.

The protein belongs to the ThiG family. As to quaternary structure, homotetramer. Forms heterodimers with either ThiH or ThiS.

Its subcellular location is the cytoplasm. It catalyses the reaction [ThiS sulfur-carrier protein]-C-terminal-Gly-aminoethanethioate + 2-iminoacetate + 1-deoxy-D-xylulose 5-phosphate = [ThiS sulfur-carrier protein]-C-terminal Gly-Gly + 2-[(2R,5Z)-2-carboxy-4-methylthiazol-5(2H)-ylidene]ethyl phosphate + 2 H2O + H(+). It functions in the pathway cofactor biosynthesis; thiamine diphosphate biosynthesis. In terms of biological role, catalyzes the rearrangement of 1-deoxy-D-xylulose 5-phosphate (DXP) to produce the thiazole phosphate moiety of thiamine. Sulfur is provided by the thiocarboxylate moiety of the carrier protein ThiS. In vitro, sulfur can be provided by H(2)S. The sequence is that of Thiazole synthase from Geobacillus sp. (strain WCH70).